The primary structure comprises 220 residues: N-(5'-phosphoribosyl)anthranilate isomerase (220 aa).

Belongs to the TrpF family.

The enzyme catalyses N-(5-phospho-beta-D-ribosyl)anthranilate = 1-(2-carboxyphenylamino)-1-deoxy-D-ribulose 5-phosphate. It functions in the pathway amino-acid biosynthesis; L-tryptophan biosynthesis; L-tryptophan from chorismate: step 3/5. The sequence is that of N-(5'-phosphoribosyl)anthranilate isomerase from Xylella fastidiosa (strain M12).